The sequence spans 555 residues: Developmental regulatory protein wetA (555 aa).

4 disordered regions span residues 113-171 (TGHS…LMRS), 250-310 (QSPA…SESL), 419-488 (TQAV…RGGK), and 508-531 (GVAPSGSSKTKARREQEARDRRRK). 5 stretches are compositionally biased toward polar residues: residues 162–171 (QSFSPGLMRS), 259–281 (PSANALAGQQQRYLSQTGTSALT), 293–310 (SPHSSDPQSMPSWHSESL), 419–431 (TQAVPHPSRSPSI), and 464–488 (SGQSTSTPKPVKTPNSLSTSPRGGK).

It belongs to the wetA family.

Functionally, brlA, abaA and wetA are pivotal regulators of conidiophore development and conidium maturation. They act individually and together to regulate their own expression and that of numerous other sporulation-specific genes. Responsible for activating a set of genes whose products make up the final two conidial wall layers or direct their assembly and, through this activity, is responsible for acquisition of spore dormancy. In Emericella nidulans (strain FGSC A4 / ATCC 38163 / CBS 112.46 / NRRL 194 / M139) (Aspergillus nidulans), this protein is Developmental regulatory protein wetA.